The primary structure comprises 685 residues: tRNA-dihydrouridine(47) synthase [NAD(P)(+)]-like (685 aa).

Positions 1-12 (MAATAAAAAAAP) are enriched in low complexity. Disordered stretches follow at residues 1 to 91 (MAAT…SSSH), 209 to 234 (AAND…PLCN), and 257 to 314 (LIDN…SCRT). A compositionally biased stretch (pro residues) spans 13-29 (PADPPDSSPAASSPPRP). The segment at 87–118 (KSSSHLCIEVGKSGNVSSCKYGDSCRFSHDID) adopts a C3H1-type zinc-finger fold. Composition is skewed to basic and acidic residues over residues 209–221 (AAND…HDNL) and 273–284 (SKVESDEIDKHG). Residues 287–314 (TLNTNTESEDPNLSNGLEPSNNSSSCRT) are compositionally biased toward polar residues. Residues 338 to 340 (PLT) and Gln392 each bind FMN. Catalysis depends on Cys423, which acts as the Proton donor. Residues Lys462, His492, 525–527 (NGD), and 550–551 (AR) contribute to the FMN site.

This sequence belongs to the Dus family. Dus3 subfamily. FMN serves as cofactor.

The enzyme catalyses 5,6-dihydrouridine(47) in tRNA + NAD(+) = uridine(47) in tRNA + NADH + H(+). It catalyses the reaction 5,6-dihydrouridine(47) in tRNA + NADP(+) = uridine(47) in tRNA + NADPH + H(+). It carries out the reaction a 5,6-dihydrouridine in mRNA + NAD(+) = a uridine in mRNA + NADH + H(+). The catalysed reaction is a 5,6-dihydrouridine in mRNA + NADP(+) = a uridine in mRNA + NADPH + H(+). Functionally, catalyzes the synthesis of dihydrouridine, a modified base found in the D-loop of most tRNAs. Specifically modifies U47 in cytoplasmic tRNAs. Catalyzes the synthesis of dihydrouridine in some mRNAs, thereby affecting their translation. This is tRNA-dihydrouridine(47) synthase [NAD(P)(+)]-like from Oryza sativa subsp. japonica (Rice).